The primary structure comprises 84 residues: Cell division topological specificity factor (84 aa).

This sequence belongs to the MinE family.

Prevents the cell division inhibition by proteins MinC and MinD at internal division sites while permitting inhibition at polar sites. This ensures cell division at the proper site by restricting the formation of a division septum at the midpoint of the long axis of the cell. This Ectopseudomonas mendocina (strain ymp) (Pseudomonas mendocina) protein is Cell division topological specificity factor.